Here is a 67-residue protein sequence, read N- to C-terminus: Conotoxin Cl14c (67 aa).

Residues 1-20 (MNVTVMFLVLLLLTMPLTDG) form the signal peptide. The propeptide occupies 21–48 (FNIRATNGGELFGPVQRDAGNVLDHGFQ).

It belongs to the conotoxin L superfamily. Contains 2 disulfide bonds. As to expression, expressed by the venom duct.

Its subcellular location is the secreted. This is Conotoxin Cl14c from Californiconus californicus (California cone).